The primary structure comprises 622 residues: MASMNQPQPYMDVHSHLSSGQTYASHPATAGALTHYQYPQQPPVLQPTSTYGPASSYSQYPYPNSVASSQSVPPPTTSISSQVPAQLLPLPVTNHPVPTHGYGNNSGTPMQGYVYDPTGQMAPPGAKPRVTATLWEDEGSLCYQVEAKGVCVARREDNGMINGTKLLNVAGMTRGRRDGILKSEKVRNVVKIGPMHLKGVWIPFDRALEFANKEKITDLLYPLFVQHISNLLYHPANQNQRNMTVPDSRRLEGPQPVVRTPQAQQPPSLHHHSLQTPVPSHMSQPGGRPSLDRAHTFPTPPASASSLIGITSQNNSYDWNPGMNSSVPNTQPLSIDTSLSNARSMPTTPATTPPGNNLQGMQSYQPQSGYDSKPYYSAAPSTHPQYAPQQPLPQQSMAQYGHSMPTSSYRDMAPPSSQRGSVTEIESDVKTERYGQGTVAKTEPEQEQEYAQPDSGYNTGRGSYYTTNPSVGGLAHDHSQLTPDMTGSPQQNGSGRMTPRTSNTAPQWAPGYTTPPRPAAASSLYNIVSDTRGTSGANGSTSDNYSVASNSGYSTGMNGSMGSNKRMRDDDDDRIVPPDSRGEFDTKRRKTLTETPVGGPVGGVPLGLQPMKAGGSLISARR.

Disordered stretches follow at residues 1–24 (MASMNQPQPYMDVHSHLSSGQTYA) and 62–81 (YPNSVASSQSVPPPTTSISS). The 107-residue stretch at 129–235 (RVTATLWEDE…QHISNLLYHP (107 aa)) folds into the HTH APSES-type domain. Residues 163–184 (GTKLLNVAGMTRGRRDGILKSE) constitute a DNA-binding region (H-T-H motif). Disordered regions lie at residues 239-517 (NQRN…TPPR) and 549-622 (SNSG…SARR). Polar residues-rich tracts occupy residues 274 to 283 (LQTPVPSHMS), 302 to 345 (ASAS…ARSM), and 355 to 370 (GNNLQGMQSYQPQSGY). Positions 384–395 (PQYAPQQPLPQQ) are enriched in low complexity. 4 stretches are compositionally biased toward polar residues: residues 404 to 421 (MPTSSYRDMAPPSSQRGS), 455 to 470 (SGYNTGRGSYYTTNPS), 480 to 506 (QLTPDMTGSPQQNGSGRMTPRTSNTAP), and 549 to 563 (SNSGYSTGMNGSMGS). The tract at residues 565–590 (KRMRDDDDDRIVPPDSRGEFDTKRRK) is nuclear localization domain. The span at 566-586 (RMRDDDDDRIVPPDSRGEFDT) shows a compositional bias: basic and acidic residues.

Belongs to the EFG1/PHD1/stuA family.

It is found in the nucleus. Transcription factor that regulates asexual reproduction. Binds the StuA-response elements (StRE) with the consensus sequence 5'-(A/T)CGCG(T/A)N(A/C)-3' at the promoters of target genes. Required from the very earliest events of asexual reproduction until completion of conidiophore development, but is not specifically required for differentiation of conidia. Represses transcription of the abaA developmental regulatory gene and of the developmentally regulated awh11 gene. Controls the expression of the catalase-peroxidase gene cpeA. Plays an important role in cell wall biogenesis during the development by controlling the transcription level of fksA. The protein is Cell pattern formation-associated protein stuA of Emericella nidulans (strain FGSC A4 / ATCC 38163 / CBS 112.46 / NRRL 194 / M139) (Aspergillus nidulans).